The following is a 320-amino-acid chain: Cytochrome f (320 aa).

An N-terminal signal peptide occupies residues 1–35 (MQNRNFNNLIIKWAIRLISIMIIINTIFWSSISEA). Residues phenylalanine 36, cysteine 56, cysteine 59, and histidine 60 each contribute to the heme site. A helical membrane pass occupies residues 286–305 (IQGLLLFFGSVILAQIFLVL).

This sequence belongs to the cytochrome f family. As to quaternary structure, the 4 large subunits of the cytochrome b6-f complex are cytochrome b6, subunit IV (17 kDa polypeptide, petD), cytochrome f and the Rieske protein, while the 4 small subunits are PetG, PetL, PetM and PetN. The complex functions as a dimer. It depends on heme as a cofactor.

It is found in the plastid. The protein localises to the chloroplast thylakoid membrane. Functionally, component of the cytochrome b6-f complex, which mediates electron transfer between photosystem II (PSII) and photosystem I (PSI), cyclic electron flow around PSI, and state transitions. The polypeptide is Cytochrome f (petA) (Marchantia polymorpha (Common liverwort)).